The primary structure comprises 209 residues: uncharacterized protein (209 aa).

3 consecutive transmembrane segments (helical) span residues 10 to 32, 37 to 59, and 64 to 86; these read AVVI…YLAF, LRYV…TGLI, and FIYF…ILYV.

The protein resides in the cell membrane. This is an uncharacterized protein from Aquifex aeolicus (strain VF5).